Reading from the N-terminus, the 42-residue chain is Photosystem I reaction center subunit IX (42 aa).

The helical transmembrane segment at Y7–I27 threads the bilayer.

The protein belongs to the PsaJ family.

The protein resides in the plastid membrane. Its function is as follows. May help in the organization of the PsaE and PsaF subunits. The chain is Photosystem I reaction center subunit IX from Cuscuta exaltata (Tall dodder).